The chain runs to 418 residues: Actin-related protein 3B (418 aa).

Belongs to the actin family. ARP3 subfamily. As to quaternary structure, interacts with the Arp2/3 complex composed of ARP2, ARP3, ARPC1B, ARPC1B/p41-ARC, ARPC2/p34-ARC, ARPC3/p21-ARC, ARPC4/p20-ARC and ARPC5/p16-ARC. As to expression, detected in fetal brain. Detected throughout the adult brain, in neurons from gray matter, but not in white matter. Detected in liver, skeletal muscle and pancreas. Detected in lung adenocarcinoma cells with low metastatic potential, but not in lung adenocarcinoma cells with high metastatic potential.

The protein resides in the cytoplasm. It localises to the cytoskeleton. It is found in the cell projection. In terms of biological role, plays a role in the organization of the actin cytoskeleton. May function as ATP-binding component of the Arp2/3 complex which is involved in regulation of actin polymerization and together with an activating nucleation-promoting factor (NPF) mediates the formation of branched actin networks. May decrease the metastatic potential of tumors. The polypeptide is Actin-related protein 3B (ACTR3B) (Homo sapiens (Human)).